The sequence spans 211 residues: Uracil phosphoribosyltransferase (211 aa).

5-phospho-alpha-D-ribose 1-diphosphate-binding positions include Arg79, Arg104, and 131-139 (DPMLATGGS). Residues Ile196 and 201 to 203 (GDA) contribute to the uracil site. A 5-phospho-alpha-D-ribose 1-diphosphate-binding site is contributed by Asp202.

Belongs to the UPRTase family. It depends on Mg(2+) as a cofactor.

The enzyme catalyses UMP + diphosphate = 5-phospho-alpha-D-ribose 1-diphosphate + uracil. The protein operates within pyrimidine metabolism; UMP biosynthesis via salvage pathway; UMP from uracil: step 1/1. Allosterically activated by GTP. Catalyzes the conversion of uracil and 5-phospho-alpha-D-ribose 1-diphosphate (PRPP) to UMP and diphosphate. In Lactococcus lactis subsp. cremoris (strain SK11), this protein is Uracil phosphoribosyltransferase.